The chain runs to 131 residues: Fumarate reductase subunit C (131 aa).

3 helical membrane-spanning segments follow: residues 30 to 50, 61 to 81, and 110 to 130; these read EGTA…LFAL, IGFL…AAAL, and IKGL…VALF.

The protein belongs to the FrdC family. Part of an enzyme complex containing four subunits: a flavoprotein (FrdA), an iron-sulfur protein (FrdB), and two hydrophobic anchor proteins (FrdC and FrdD).

The protein localises to the cell inner membrane. Two distinct, membrane-bound, FAD-containing enzymes are responsible for the catalysis of fumarate and succinate interconversion; fumarate reductase is used in anaerobic growth, and succinate dehydrogenase is used in aerobic growth. Anchors the catalytic components of the fumarate reductase complex to the cell inner membrane, binds quinones. The chain is Fumarate reductase subunit C from Klebsiella pneumoniae (strain 342).